The following is a 246-amino-acid chain: Exosome complex component Rrp41 (246 aa).

It belongs to the RNase PH family. Rrp41 subfamily. In terms of assembly, component of the archaeal exosome complex. Forms a hexameric ring-like arrangement composed of 3 Rrp41-Rrp42 heterodimers. The hexameric ring associates with a trimer of Rrp4 and/or Csl4 subunits.

It is found in the cytoplasm. Its function is as follows. Catalytic component of the exosome, which is a complex involved in RNA degradation. Has 3'-&gt;5' exoribonuclease activity. Can also synthesize heteromeric RNA-tails. In Pyrobaculum neutrophilum (strain DSM 2338 / JCM 9278 / NBRC 100436 / V24Sta) (Thermoproteus neutrophilus), this protein is Exosome complex component Rrp41.